The primary structure comprises 533 residues: Retinoid isomerohydrolase (533 aa).

The residue at position 2 (Ser-2) is an N-acetylserine. A lipid anchor (S-palmitoyl cysteine; in membrane form) is attached at Cys-112. Residue His-180 coordinates Fe cation. Cys-231 carries S-palmitoyl cysteine; in membrane form lipidation. Residues His-241 and His-313 each contribute to the Fe cation site. Residues Cys-329 and Cys-330 are each lipidated (S-palmitoyl cysteine; in membrane form). Fe cation is bound at residue His-527.

This sequence belongs to the carotenoid oxygenase family. It depends on Fe(2+) as a cofactor. In terms of processing, palmitoylation by LRAT regulates ligand binding specificity; the palmitoylated form (membrane form) specifically binds all-trans-retinyl-palmitate, while the soluble unpalmitoylated form binds all-trans-retinol (vitamin A). Retinal pigment epithelium specific.

It is found in the cell membrane. The enzyme catalyses an all-trans-retinyl ester + H2O = 11-cis-retinol + a fatty acid + H(+). It carries out the reaction lutein = (3R,3'S)-zeaxanthin. The catalysed reaction is all-trans-retinyl hexadecanoate + H2O = 11-cis-retinol + hexadecanoate + H(+). Functionally, critical isomerohydrolase in the retinoid cycle involved in regeneration of 11-cis-retinal, the chromophore of rod and cone opsins. Catalyzes the cleavage and isomerization of all-trans-retinyl fatty acid esters to 11-cis-retinol which is further oxidized by 11-cis retinol dehydrogenase to 11-cis-retinal for use as visual chromophore. Essential for the production of 11-cis retinal for both rod and cone photoreceptors. Also capable of catalyzing the isomerization of lutein to meso-zeaxanthin an eye-specific carotenoid. The soluble form binds vitamin A (all-trans-retinol), making it available for LRAT processing to all-trans-retinyl ester. The membrane form, palmitoylated by LRAT, binds all-trans-retinyl esters, making them available for IMH (isomerohydrolase) processing to all-cis-retinol. The soluble form is regenerated by transferring its palmitoyl groups onto 11-cis-retinol, a reaction catalyzed by LRAT. In Cynops pyrrhogaster (Japanese fire-bellied newt), this protein is Retinoid isomerohydrolase (RPE65).